The following is a 330-amino-acid chain: 7,8-didemethyl-8-hydroxy-5-deazariboflavin synthase (330 aa).

The 241-residue stretch at 13-253 folds into the Radical SAM core domain; that stretch reads VTFSKNAFIP…EDISIQVPPN (241 aa). Positions 27, 31, and 34 each coordinate [4Fe-4S] cluster.

This sequence belongs to the radical SAM superfamily. CofG family. As to quaternary structure, consists of two subunits, CofG and CofH. Requires [4Fe-4S] cluster as cofactor.

The catalysed reaction is 5-amino-5-(4-hydroxybenzyl)-6-(D-ribitylimino)-5,6-dihydrouracil + S-adenosyl-L-methionine = 7,8-didemethyl-8-hydroxy-5-deazariboflavin + 5'-deoxyadenosine + L-methionine + NH4(+) + H(+). Its pathway is cofactor biosynthesis; coenzyme F0 biosynthesis. In terms of biological role, catalyzes the radical-mediated synthesis of 7,8-didemethyl-8-hydroxy-5-deazariboflavin from 5-amino-5-(4-hydroxybenzyl)-6-(D-ribitylimino)-5,6-dihydrouracil. The sequence is that of 7,8-didemethyl-8-hydroxy-5-deazariboflavin synthase from Methanococcus maripaludis (strain DSM 14266 / JCM 13030 / NBRC 101832 / S2 / LL).